Here is a 552-residue protein sequence, read N- to C-terminus: Putative pentatricopeptide repeat-containing protein At1g64310 (552 aa).

PPR repeat units lie at residues 39-69 (DPYF…FPER), 70-104 (SVFL…DTRP), 105-139 (DNFT…GLGF), 140-170 (DQIC…IPDP), 171-205 (DLAL…GHQP), 206-240 (NCYT…NLDS), 241-271 (HSYV…ISEP), 272-306 (DLVA…GKKP), 307-341 (DCVL…GLEL), 342-372 (DIKV…IPEK), 373-407 (NIVS…GLIP), 408-438 (DEIT…MKSE), and 444-474 (QTEH…LQKP). The type E motif; degenerate stretch occupies residues 479 to 552 (ILGALLSCCE…GGKLPGISWF (74 aa)).

This sequence belongs to the PPR family. PCMP-E subfamily.

In Arabidopsis thaliana (Mouse-ear cress), this protein is Putative pentatricopeptide repeat-containing protein At1g64310 (PCMP-E65).